The primary structure comprises 505 residues: Histidine ammonia-lyase (505 aa).

The 5-imidazolinone (Ala-Gly) cross-link spans 141-143 (ASG). Ser142 is modified (2,3-didehydroalanine (Ser)).

The protein belongs to the PAL/histidase family. Post-translationally, contains an active site 4-methylidene-imidazol-5-one (MIO), which is formed autocatalytically by cyclization and dehydration of residues Ala-Ser-Gly.

The protein localises to the cytoplasm. It carries out the reaction L-histidine = trans-urocanate + NH4(+). The protein operates within amino-acid degradation; L-histidine degradation into L-glutamate; N-formimidoyl-L-glutamate from L-histidine: step 1/3. The chain is Histidine ammonia-lyase from Bacillus cytotoxicus (strain DSM 22905 / CIP 110041 / 391-98 / NVH 391-98).